The chain runs to 515 residues: Protein DETOXIFICATION 42 (515 aa).

Over 1-35 (MMSEDGYNTDFPRNPLYIFFSDFRSVLKFDELGLE) the chain is Cytoplasmic. Residues 36 to 56 (IARIALPAALALTADPIASLV) traverse the membrane as a helical segment. The Extracellular segment spans residues 57–58 (DT). Residues 59–79 (AFIGQIGPVELAAVGVSIALF) form a helical membrane-spanning segment. The Cytoplasmic segment spans residues 80-168 (NQVSRIAIFP…AKKRNIPSAS (89 aa)). The helical transmembrane segment at 169–189 (SALIIGGVLGLFQAVFLISAA) threads the bilayer. Residues 190–211 (KPLLSFMGVKHDSPMMRPSQRY) are Extracellular-facing. The helical transmembrane segment at 212 to 232 (LSLRSLGAPAVLLSLAAQGVF) threads the bilayer. At 233 to 242 (RGFKDTTTPL) the chain is on the cytoplasmic side. The chain crosses the membrane as a helical span at residues 243–263 (FATVIGDVTNIILDPIFIFVF). The Extracellular portion of the chain corresponds to 264–266 (RLG). The helical transmembrane segment at 267-287 (VTGAATAHVISQYLMCGILLW) threads the bilayer. Residues 288–312 (KLMGQVDIFNMSTKHLQFCRFMKNG) are Cytoplasmic-facing. A helical membrane pass occupies residues 313 to 333 (FLLLMRVIAVTFCVTLSASLA). Topologically, residues 334 to 349 (AREGSTSMAAFQVCLQ) are extracellular. Residues 350 to 370 (VWLATSLLADGYAVAGQAILA) traverse the membrane as a helical segment. Residues 371-390 (SAFAKKDYKRAAATASRVLQ) are Cytoplasmic-facing. Residues 391 to 411 (LGLVLGFVLAVILGAGLHFGA) form a helical membrane-spanning segment. At 412 to 423 (RVFTKDDKVLHL) the chain is on the extracellular side. A helical membrane pass occupies residues 424-444 (ISIGLPFVAGTQPINALAFVF). Residues 445–453 (DGVNFGASD) are Cytoplasmic-facing. A helical membrane pass occupies residues 454–474 (FGYAAASLVMVAIVSILCLLF). The Extracellular segment spans residues 475-480 (LSSTHG). The chain crosses the membrane as a helical span at residues 481-501 (FIGLWFGLTIYMSLRAAVGFW). At 502-515 (RIGTGTGPWSFLRS) the chain is on the cytoplasmic side.

This sequence belongs to the multi antimicrobial extrusion (MATE) (TC 2.A.66.1) family. Expressed in roots, but not in shoots. Detected in the mature regions of the root, extending from above the root-hair region to the root-shoot junction.

Its subcellular location is the cell membrane. Citrate transporter critical for aluminum tolerance. Responsible for citrate exudation into the rhizosphere to protect roots from aluminum toxicity. The chain is Protein DETOXIFICATION 42 from Arabidopsis thaliana (Mouse-ear cress).